A 71-amino-acid chain; its full sequence is Conotoxin LvVIB (71 aa).

The signal sequence occupies residues 1–17 (VLIIAVLFLTASELVTA). The propeptide occupies 18-41 (DYTRDKWQYRAASLRDAMRNFRDT). Cystine bridges form between C43–C57, C50–C62, and C56–C69.

Belongs to the conotoxin O1 superfamily. As to expression, expressed by the venom duct.

Its subcellular location is the secreted. This is Conotoxin LvVIB from Conus lividus (Livid cone).